We begin with the raw amino-acid sequence, 184 residues long: Peptidyl-tRNA hydrolase (184 aa).

Tyrosine 13 contacts tRNA. Histidine 18 serves as the catalytic Proton acceptor. TRNA-binding residues include phenylalanine 59, asparagine 61, and asparagine 105.

It belongs to the PTH family. Monomer.

The protein localises to the cytoplasm. The enzyme catalyses an N-acyl-L-alpha-aminoacyl-tRNA + H2O = an N-acyl-L-amino acid + a tRNA + H(+). In terms of biological role, hydrolyzes ribosome-free peptidyl-tRNAs (with 1 or more amino acids incorporated), which drop off the ribosome during protein synthesis, or as a result of ribosome stalling. Catalyzes the release of premature peptidyl moieties from peptidyl-tRNA molecules trapped in stalled 50S ribosomal subunits, and thus maintains levels of free tRNAs and 50S ribosomes. This is Peptidyl-tRNA hydrolase from Sulfurimonas denitrificans (strain ATCC 33889 / DSM 1251) (Thiomicrospira denitrificans (strain ATCC 33889 / DSM 1251)).